We begin with the raw amino-acid sequence, 384 residues long: MVTEDFYKYQVWYFQILGVWQLPTWAADHQRRFQSMRFGFILVILFIMLLLFSFEMLNNISQVREILKVFFMFATEISCMAKLLHLKLKSRKLAGLVDAMLSPEFGVKSEQEMQMLELDRVAVVRMRNSYGIMSLGAASLILIVPCFDNFGELPLAMLEVCSIEGWICYWSQYLFHSICLLPTCVLNITYDSVAYSLLCFLKVQLQMLVLRLEKLGPVIEPQDNEKIAMELRECAAYYNRIVRFKDLVELFIKGPGSVQLMCSVLVLVSNLYDMSTMSIANGDAIFMLKTCIYQLVMLWQIFIICYASNEVTVQSSRLCHSIYSSQWTGWNRANRRIVLLMMQRFNSPMLLSTFNPTFAFSLEAFGSIVNCSYSYFALLKRVNS.

At 1–37 (MVTEDFYKYQVWYFQILGVWQLPTWAADHQRRFQSMR) the chain is on the cytoplasmic side. Residues 38–58 (FGFILVILFIMLLLFSFEMLN) traverse the membrane as a helical segment. N-linked (GlcNAc...) asparagine glycosylation occurs at asparagine 59. The Extracellular portion of the chain corresponds to 59–65 (NISQVRE). The helical transmembrane segment at 66–86 (ILKVFFMFATEISCMAKLLHL) threads the bilayer. Topologically, residues 87–130 (KLKSRKLAGLVDAMLSPEFGVKSEQEMQMLELDRVAVVRMRNSY) are cytoplasmic. Residues 131–151 (GIMSLGAASLILIVPCFDNFG) traverse the membrane as a helical segment. Topologically, residues 152–165 (ELPLAMLEVCSIEG) are extracellular. Residues 166–186 (WICYWSQYLFHSICLLPTCVL) traverse the membrane as a helical segment. Over 187–247 (NITYDSVAYS…YNRIVRFKDL (61 aa)) the chain is Cytoplasmic. The chain crosses the membrane as a helical span at residues 248–268 (VELFIKGPGSVQLMCSVLVLV). The Extracellular segment spans residues 269-283 (SNLYDMSTMSIANGD). A helical membrane pass occupies residues 284-304 (AIFMLKTCIYQLVMLWQIFII). At 305–348 (CYASNEVTVQSSRLCHSIYSSQWTGWNRANRRIVLLMMQRFNSP) the chain is on the cytoplasmic side. Residues 349 to 369 (MLLSTFNPTFAFSLEAFGSIV) form a helical membrane-spanning segment. Asparagine 370 carries N-linked (GlcNAc...) asparagine glycosylation. Over 370-384 (NCSYSYFALLKRVNS) the chain is Extracellular.

It belongs to the insect chemoreceptor superfamily. Heteromeric odorant receptor channel (TC 1.A.69) family. Or2a subfamily. Interacts with Orco. Complexes exist early in the endomembrane system in olfactory sensory neurons (OSNs), coupling these complexes to the conserved ciliary trafficking pathway. In terms of tissue distribution, isoform B is expressed in the antenna.

It localises to the cell membrane. Its function is as follows. Odorant receptor which mediates acceptance or avoidance behavior, depending on its substrates. The odorant receptor repertoire encodes a large collection of odor stimuli that vary widely in identity, intensity, and duration. May form a complex with Orco to form odorant-sensing units, providing sensitive and prolonged odorant signaling and calcium permeability. The sequence is that of Odorant receptor 46a, isoform B (Or46a) from Drosophila melanogaster (Fruit fly).